The primary structure comprises 180 residues: Large ribosomal subunit protein uL6 (180 aa).

It belongs to the universal ribosomal protein uL6 family. In terms of assembly, part of the 50S ribosomal subunit.

Functionally, this protein binds to the 23S rRNA, and is important in its secondary structure. It is located near the subunit interface in the base of the L7/L12 stalk, and near the tRNA binding site of the peptidyltransferase center. In Thermus aquaticus, this protein is Large ribosomal subunit protein uL6.